A 494-amino-acid chain; its full sequence is Alpha-amylase-related protein (494 aa).

The first 20 residues, 1-20 (MFKFAAAVILCLVAASSTLA), serve as a signal peptide directing secretion. Glutamine 21 carries the pyrrolidone carboxylic acid modification. Cysteines 48 and 104 form a disulfide. Positions 118, 169, and 178 each coordinate Ca(2+). Residues cysteine 157 and cysteine 171 are joined by a disulfide bond. Residue arginine 206 participates in chloride binding. Aspartate 208 functions as the Nucleophile in the catalytic mechanism. Position 212 (histidine 212) interacts with Ca(2+). Glutamate 245 serves as the catalytic Proton donor. Chloride-binding residues include asparagine 308 and arginine 343. Cystine bridges form between cysteine 376–cysteine 382, cysteine 418–cysteine 441, and cysteine 448–cysteine 460.

This sequence belongs to the glycosyl hydrolase 13 family. In terms of assembly, monomer. Ca(2+) is required as a cofactor. Requires chloride as cofactor.

The protein resides in the secreted. It carries out the reaction Endohydrolysis of (1-&gt;4)-alpha-D-glucosidic linkages in polysaccharides containing three or more (1-&gt;4)-alpha-linked D-glucose units.. The protein is Alpha-amylase-related protein (Amyrel) of Drosophila atripex (Fruit fly).